The sequence spans 367 residues: Auxin efflux carrier component 8 (367 aa).

Over Met-1 to Asp-6 the chain is Extracellular. The chain crosses the membrane as a helical span at residues Ile-7–Ser-27. The Cytoplasmic portion of the chain corresponds to Ala-28–Gln-38. Residues Cys-39–Ile-59 form a helical membrane-spanning segment. Ile-51 provides a ligand contact to (indol-3-yl)acetate. Residues Ser-60–Pro-69 lie on the Extracellular side of the membrane. The helical transmembrane segment at Lys-70–Leu-90 threads the bilayer. The Cytoplasmic portion of the chain corresponds to Arg-91–Trp-105. A helical membrane pass occupies residues Val-106 to Leu-126. Residues Asn-117 and Leu-119 each contribute to the (indol-3-yl)acetate site. Topologically, residues Ser-127 to Ser-136 are extracellular. A helical membrane pass occupies residues Ile-137–Phe-157. Tyr-150 is a (indol-3-yl)acetate binding site. The Cytoplasmic portion of the chain corresponds to Glu-158 to Thr-227. The tract at residues Ser-168–Glu-194 is disordered. Over residues Asp-178 to Glu-194 the composition is skewed to acidic residues. A helical transmembrane segment spans residues Leu-228–Ile-248. Residues Asp-249 to Ser-251 are Extracellular-facing. The chain crosses the membrane as a helical span at residues Ile-252–Ala-272. At Ser-273–Thr-288 the chain is on the cytoplasmic side. Residues Met-289–Leu-309 traverse the membrane as a helical segment. Topologically, residues Lys-310–Thr-312 are extracellular. Residues Leu-313–Ala-333 traverse the membrane as a helical segment. Residues Val-327 and Val-328 each contribute to the (indol-3-yl)acetate site. Residues Lys-334–Ser-344 are Cytoplasmic-facing. Residues Thr-345 to Leu-365 form a helical membrane-spanning segment. Residues Asp-366–Leu-367 are Extracellular-facing.

The protein belongs to the auxin efflux carrier (TC 2.A.69.1) family. Homodimer. In terms of tissue distribution, expressed in veins of mature leaves. Strongly expressed in pollen.

Its subcellular location is the endoplasmic reticulum membrane. The protein localises to the cell membrane. Auxin efflux carrier activity is competitively inhibited by naptalamate (N-1-naphthylphthalamic acid, NPA). Acts as a component of the auxin efflux carrier. Component of the intracellular auxin-transport pathway in the male gametophyte. Involved in the regulation of auxin homeostasis in pollen. Involved in the efflux of auxin from the endoplasmic reticulum into the cytoplasm. Binds auxins including indole-3-acetic acid (IAA), naphthaleneacetic acid (NAA) and the herbicide 2,4-dichlorophenoxyacetic acid (2,4-D), but barely indole-3-butyric acid (IBA) and 2-phenylacetic acid (PAA). PIN5 and PIN8 may have an antagonistic/compensatory activity. Involved in the control of vein patterning. Redundantly with PIN6, inhibits the vein-formation-promoting functions of PIN5. PIN5, PIN6, and PIN8 control vein network geometry, but they are expressed in mutually exclusive domains of leaf vascular cells. This chain is Auxin efflux carrier component 8, found in Arabidopsis thaliana (Mouse-ear cress).